Consider the following 328-residue polypeptide: Putative tyrosine-protein kinase C03B1.5 (328 aa).

The Protein kinase domain maps to 25–288 (WSPALKIGSG…ALHASSQTYL (264 aa)). ATP is bound by residues 31 to 39 (IGSGAFGEV) and K62. D155 functions as the Proton acceptor in the catalytic mechanism.

This sequence belongs to the protein kinase superfamily. Tyr protein kinase family.

The catalysed reaction is L-tyrosyl-[protein] + ATP = O-phospho-L-tyrosyl-[protein] + ADP + H(+). This chain is Putative tyrosine-protein kinase C03B1.5, found in Caenorhabditis elegans.